Reading from the N-terminus, the 249-residue chain is 23S rRNA (guanosine-2'-O-)-methyltransferase RlmB (249 aa).

Glycine 200, isoleucine 220, and leucine 229 together coordinate S-adenosyl-L-methionine.

Belongs to the class IV-like SAM-binding methyltransferase superfamily. RNA methyltransferase TrmH family. RlmB subfamily.

The protein resides in the cytoplasm. The catalysed reaction is guanosine(2251) in 23S rRNA + S-adenosyl-L-methionine = 2'-O-methylguanosine(2251) in 23S rRNA + S-adenosyl-L-homocysteine + H(+). Specifically methylates the ribose of guanosine 2251 in 23S rRNA. This chain is 23S rRNA (guanosine-2'-O-)-methyltransferase RlmB, found in Xylella fastidiosa (strain Temecula1 / ATCC 700964).